The chain runs to 377 residues: WAT1-related protein At3g56620 (377 aa).

A run of 10 helical transmembrane segments spans residues 13–33, 40–60, 67–87, 102–122, 142–162, 183–203, 210–230, 235–255, 274–294, and 299–319; these read FAMVCLQFGYAGMNLVTKVVL, YVLVAYRNAFATAAIAPFALL, PKMTFPIFMQIFVLALLGPLI, TFAGAVTNIVPALTFIISIIC, LVIVVGAMLMILFKIPLITFL, VFLLIASFSWASFFVLQAATL, LSLSTMVCFMGTLQSTALTFV, LSAWNIGFDMNLLASAYAGIM, IFVTAFNPLVVIIGSIIGFLI, and LNLGGVLGMAILVVGVCTVLW. EamA domains are found at residues 22 to 152 and 190 to 318; these read YAGM…MLMI and FSWA…CTVL.

The protein belongs to the drug/metabolite transporter (DMT) superfamily. Plant drug/metabolite exporter (P-DME) (TC 2.A.7.4) family.

It is found in the membrane. In Arabidopsis thaliana (Mouse-ear cress), this protein is WAT1-related protein At3g56620.